We begin with the raw amino-acid sequence, 246 residues long: 3-deoxy-manno-octulosonate cytidylyltransferase (246 aa).

It belongs to the KdsB family.

Its subcellular location is the cytoplasm. It catalyses the reaction 3-deoxy-alpha-D-manno-oct-2-ulosonate + CTP = CMP-3-deoxy-beta-D-manno-octulosonate + diphosphate. The protein operates within nucleotide-sugar biosynthesis; CMP-3-deoxy-D-manno-octulosonate biosynthesis; CMP-3-deoxy-D-manno-octulosonate from 3-deoxy-D-manno-octulosonate and CTP: step 1/1. It functions in the pathway bacterial outer membrane biogenesis; lipopolysaccharide biosynthesis. Activates KDO (a required 8-carbon sugar) for incorporation into bacterial lipopolysaccharide in Gram-negative bacteria. This Myxococcus xanthus (strain DK1622) protein is 3-deoxy-manno-octulosonate cytidylyltransferase.